We begin with the raw amino-acid sequence, 216 residues long: Ornithine decarboxylase antizyme 1 (216 aa).

Belongs to the ODC antizyme family. In terms of assembly, interacts with ODC1 and thereby sterically blocks ODC homodimerization.

Ornithine decarboxylase (ODC) antizyme protein that negatively regulates ODC activity and intracellular polyamine biosynthesis and uptake in response to increased intracellular polyamine levels. Binds to ODC monomers, inhibiting the assembly of the functional ODC homodimer, and targets the monomers for ubiquitin-independent proteolytic destruction by the 26S proteasome. The sequence is that of Ornithine decarboxylase antizyme 1 (oaz1) from Xenopus laevis (African clawed frog).